Here is a 430-residue protein sequence, read N- to C-terminus: Glutamate-1-semialdehyde 2,1-aminomutase (430 aa).

Lys-269 carries the post-translational modification N6-(pyridoxal phosphate)lysine.

The protein belongs to the class-III pyridoxal-phosphate-dependent aminotransferase family. HemL subfamily. Homodimer. Pyridoxal 5'-phosphate is required as a cofactor.

It is found in the cytoplasm. The enzyme catalyses (S)-4-amino-5-oxopentanoate = 5-aminolevulinate. The protein operates within porphyrin-containing compound metabolism; protoporphyrin-IX biosynthesis; 5-aminolevulinate from L-glutamyl-tRNA(Glu): step 2/2. This is Glutamate-1-semialdehyde 2,1-aminomutase from Desulfitobacterium hafniense (strain DSM 10664 / DCB-2).